The chain runs to 612 residues: Actin-binding LIM protein 2 (612 aa).

LIM zinc-binding domains follow at residues 22–81 (ILCN…LYGT), 81–141 (TRCF…TLLG), 151–210 (RSCG…KFGI), and 210–270 (IRCD…ARTE). Positions 83, 86, 103, 106, 109, 112, 131, and 134 each coordinate Zn(2+). Zn(2+) is bound by residues Cys-212, Cys-215, His-232, Cys-235, Cys-238, Cys-241, His-260, and Cys-263. The span at 269 to 278 (TEDKSKETRT) shows a compositional bias: basic and acidic residues. Disordered stretches follow at residues 269 to 295 (TEDK…SGSP) and 341 to 433 (AVGD…DNIY). Residues 279–295 (SSESIVSVPASSTSGSP) show a composition bias toward low complexity. Ser-282, Ser-294, Gly-351, Arg-356, Ser-365, and Ser-368 each carry phosphoserine. A compositionally biased stretch (low complexity) spans 364–373 (SSPSSAGSVS). A compositionally biased stretch (polar residues) spans 394-416 (SGRSTPSLSVHSDSRPPSSTYQQ). A Phosphoserine modification is found at Ser-453. Residues 471–498 (ADTRTNSPDLDSQSLSLSSGTDQEPLQR) form a disordered region. The residue at position 473 (Thr-473) is a Phosphothreonine. 2 positions are modified to phosphoserine: Ser-477 and Ser-579. Residues 477-489 (SPDLDSQSLSLSS) show a composition bias toward low complexity. The 69-residue stretch at 544-612 (TREYKIYPYD…NDLKKKALLF (69 aa)) folds into the HP domain.

As to quaternary structure, interacts with F-actin and ABRA. In terms of tissue distribution, expressed in brain. Highly expressed in caudate/putamen, moderately expressed in the olfactory bulb. In the hippocampus, expressed in the CA1, CA2 and CA3 fields. In the cerebellum, expressed in Purkinje cells.

Its subcellular location is the cytoplasm. Its function is as follows. May act as scaffold protein. May stimulate ABRA activity and ABRA-dependent SRF transcriptional activity. The protein is Actin-binding LIM protein 2 (Ablim2) of Mus musculus (Mouse).